The chain runs to 118 residues: NADH-quinone oxidoreductase subunit A 2 (118 aa).

3 helical membrane-spanning segments follow: residues 5–25 (YLPI…SVIF), 62–82 (LIAM…PWAV), and 87–107 (LGMF…VGYV).

The protein belongs to the complex I subunit 3 family. NDH-1 is composed of 14 different subunits. Subunits NuoA, H, J, K, L, M, N constitute the membrane sector of the complex.

It localises to the cell inner membrane. The enzyme catalyses a quinone + NADH + 5 H(+)(in) = a quinol + NAD(+) + 4 H(+)(out). NDH-1 shuttles electrons from NADH, via FMN and iron-sulfur (Fe-S) centers, to quinones in the respiratory chain. The immediate electron acceptor for the enzyme in this species is believed to be ubiquinone. Couples the redox reaction to proton translocation (for every two electrons transferred, four hydrogen ions are translocated across the cytoplasmic membrane), and thus conserves the redox energy in a proton gradient. The chain is NADH-quinone oxidoreductase subunit A 2 from Citrifermentans bemidjiense (strain ATCC BAA-1014 / DSM 16622 / JCM 12645 / Bem) (Geobacter bemidjiensis).